The sequence spans 606 residues: MNMFSSCMITALVILTLPIIMSSTKLYKNKLYPYYVKTATSYAFMISMIPTMMFIYSGQETIFSNWHWMTIQTMKLSMSFKLNYFSMIFVPVALFVTWSIMEFSMWYMHSDPYINRFFKYLLLFLITMMVLVTANNMFQLFIGWEGVGIMSFLLIGWWYGRTDANTAALQAVLYNRIGDVGFIMTMAWFLLNLNTWDLQQIFITTNDNFNLPLLGLLLAATGKSAQFGLHPWLPSAMEGPTPVSALLHSSTMVVAGVFLLIRFHPLMEHNQTIQTLTLCLGAITTLFTAICALTQNDIKEIVSFSTSSQLGLMMVTIGINQPYLAFLHICTHAFCKAMLFMCSGSVIHSLNDEQDIRKMGGLFKVLPFTTTSLIIGSLALTGMPFLTGFYSKDLIIESANTSNTNAWALLITLVATSLTAAYSTRIMFFALLGQPRFSPMILINENNPLLINSIKRLLIGSVFAGYIISHSITPTTIPQMTMPHYLKMTALAVTILGFILALELNLTTQGLKFNYPSNYFKFSSLLGYYPTIMHRLTPKTSLTISQKSASMLLDSIWLENILPKSISYFQMKSSTLISNQKGLIKLYFLSFMLTMILSLLILNYHE.

15 consecutive transmembrane segments (helical) span residues 1–21 (MNMF…PIIM), 43–63 (AFMI…ETIF), 87–107 (MIFV…SMWY), 117–137 (FFKY…ANNM), 140–160 (LFIG…WWYG), 171–191 (AVLY…WFLL), 201–221 (IFIT…LAAT), 241–261 (TPVS…FLLI), 273–293 (IQTL…ICAL), 310–330 (LGLM…LHIC), 365–385 (VLPF…GMPF), 409–429 (LLIT…IMFF), 457–477 (LLIG…PTTI), 488–508 (MTAL…NLTT), and 582–602 (GLIK…LLIL).

It belongs to the complex I subunit 5 family. Core subunit of respiratory chain NADH dehydrogenase (Complex I) which is composed of 45 different subunits.

It is found in the mitochondrion inner membrane. It catalyses the reaction a ubiquinone + NADH + 5 H(+)(in) = a ubiquinol + NAD(+) + 4 H(+)(out). Its function is as follows. Core subunit of the mitochondrial membrane respiratory chain NADH dehydrogenase (Complex I) which catalyzes electron transfer from NADH through the respiratory chain, using ubiquinone as an electron acceptor. Essential for the catalytic activity and assembly of complex I. The protein is NADH-ubiquinone oxidoreductase chain 5 (MT-ND5) of Canis lupus familiaris (Dog).